The sequence spans 269 residues: Short-chain dehydrogenase/reductase ABA4 (269 aa).

Residues Ile-34, Asp-80, Arg-144, Tyr-174, Lys-178, Ile-207, and Thr-209 each contribute to the NADP(+) site. The Proton donor role is filled by Tyr-174. Lys-178 functions as the Lowers pKa of active site Tyr in the catalytic mechanism.

Belongs to the short-chain dehydrogenases/reductases (SDR) family.

The protein operates within hormone biosynthesis. Its function is as follows. Short-chain dehydrogenase/reductase involved in the biosynthesis of abscisic acid (ABA), a phytohormone that acts antagonistically toward salicylic acid (SA), jasmonic acid (JA) and ethylene (ETH) signaling, to impede plant defense responses. During pathogen-host interaction, ABA plays a dual role in disease severity by increasing plant susceptibility and accelerating pathogenesis in the fungus itself. The first step of the pathway catalyzes the reaction from farnesyl diphosphate to alpha-ionylideneethane performed by the alpha-ionylideneethane synthase ABA3 via a three-step reaction mechanism involving 2 neutral intermediates, beta-farnesene and allofarnesene. The cytochrome P450 monooxygenase ABA1 might then be involved in the conversion of alpha-ionylideneethane to alpha-ionylideneacetic acid. Alpha-ionylideneacetic acid is further converted to abscisic acid in 2 steps involving the cytochrome P450 monooxygenase ABA2 and the short-chain dehydrogenase/reductase ABA4, via the intermediates 1'-deoxy-ABA or 1',4'-trans-diol-ABA, depending on the order of action of these 2 enzymes. ABA2 is responsible for the hydroxylation of carbon atom C-1' and ABA4 might be involved in the oxidation of the C-4' carbon atom. The protein is Short-chain dehydrogenase/reductase ABA4 (ABA4) of Pyricularia oryzae (strain Y34) (Rice blast fungus).